The primary structure comprises 373 residues: MTVVPENFVPGLDGVVAFTTEIAEPDKDGGALRYRGVDIEDLVSQRVTFGDVWALLVDGNFGSGLPPAEPFPLPIHSGDVRVDVQAGLAMLAPIWGYAPLLDIDDATARQQLARASVMALSYVAQSARGIYQPAVPQRIIDECSTVTARFMTRWQGEPDPRHIEAIDAYWVSAAEHGMNASTFTARVIASTGADVAAALSGAIGAMSGPLHGGAPARVLPMLDEVERAGDARSVVKGILDRGEKLMGFGHRVYRAEDPRARVLRAAAERLGAPRYEVAVAVEQAALSELRERRPDRAIETNVEFWAAVVLDFARVPANMMPAMFTCGRTAGWCAHILEQKRLGKLVRPSAIYVGPGPRSPESVDGWERVLTTA.

Active-site residues include His-250 and Glu-303.

The protein belongs to the citrate synthase family.

The catalysed reaction is oxaloacetate + acetyl-CoA + H2O = citrate + CoA + H(+). Its pathway is carbohydrate metabolism; tricarboxylic acid cycle; isocitrate from oxaloacetate: step 1/2. The chain is Putative citrate synthase 2 (citA) from Mycobacterium bovis (strain ATCC BAA-935 / AF2122/97).